The sequence spans 365 residues: U-box domain-containing protein 56 (365 aa).

The stretch at 176 to 281 forms a coiled coil; the sequence is YEEQRRRLEI…ELLRALEKGE (106 aa). Residues 293-365 form the U-box domain; that stretch reads EPPQCFICPI…AIKDWLQQHP (73 aa).

It carries out the reaction S-ubiquitinyl-[E2 ubiquitin-conjugating enzyme]-L-cysteine + [acceptor protein]-L-lysine = [E2 ubiquitin-conjugating enzyme]-L-cysteine + N(6)-ubiquitinyl-[acceptor protein]-L-lysine.. It participates in protein modification; protein ubiquitination. Functionally, functions as an E3 ubiquitin ligase. The sequence is that of U-box domain-containing protein 56 (PUB56) from Arabidopsis thaliana (Mouse-ear cress).